Here is a 283-residue protein sequence, read N- to C-terminus: Digeranylgeranylglyceryl phosphate synthase (283 aa).

The next 8 membrane-spanning stretches (helical) occupy residues 21–41 (ITASIGGIIGYLISSNFEIDI), 45–65 (LLVFFVVFFVCAYGNVINDIF), 97–117 (LILGLVLSLFINIYALIIAVI), 135–155 (IGNFIIGYLTGSVFLFGGVAG), 158–178 (VMPVVILFLCSLLSIWGREIV), 204–224 (LYFATFLVVLAVILSPLPYIL), 226–246 (IFGIWYLILIAICDILFIYAM), and 261–281 (VSKFLKIIMNIVLLAFIVGAI).

Belongs to the UbiA prenyltransferase family. DGGGP synthase subfamily. It depends on Mg(2+) as a cofactor.

It localises to the cell membrane. It carries out the reaction sn-3-O-(geranylgeranyl)glycerol 1-phosphate + (2E,6E,10E)-geranylgeranyl diphosphate = 2,3-bis-O-(geranylgeranyl)-sn-glycerol 1-phosphate + diphosphate. It participates in membrane lipid metabolism; glycerophospholipid metabolism. Functionally, prenyltransferase that catalyzes the transfer of the geranylgeranyl moiety of geranylgeranyl diphosphate (GGPP) to the C2 hydroxyl of (S)-3-O-geranylgeranylglyceryl phosphate (GGGP). This reaction is the second ether-bond-formation step in the biosynthesis of archaeal membrane lipids. In Methanocaldococcus jannaschii (strain ATCC 43067 / DSM 2661 / JAL-1 / JCM 10045 / NBRC 100440) (Methanococcus jannaschii), this protein is Digeranylgeranylglyceryl phosphate synthase.